Here is a 479-residue protein sequence, read N- to C-terminus: Aspartyl/glutamyl-tRNA(Asn/Gln) amidotransferase subunit B (479 aa).

It belongs to the GatB/GatE family. GatB subfamily. In terms of assembly, heterotrimer of A, B and C subunits.

It carries out the reaction L-glutamyl-tRNA(Gln) + L-glutamine + ATP + H2O = L-glutaminyl-tRNA(Gln) + L-glutamate + ADP + phosphate + H(+). It catalyses the reaction L-aspartyl-tRNA(Asn) + L-glutamine + ATP + H2O = L-asparaginyl-tRNA(Asn) + L-glutamate + ADP + phosphate + 2 H(+). Its function is as follows. Allows the formation of correctly charged Asn-tRNA(Asn) or Gln-tRNA(Gln) through the transamidation of misacylated Asp-tRNA(Asn) or Glu-tRNA(Gln) in organisms which lack either or both of asparaginyl-tRNA or glutaminyl-tRNA synthetases. The reaction takes place in the presence of glutamine and ATP through an activated phospho-Asp-tRNA(Asn) or phospho-Glu-tRNA(Gln). The protein is Aspartyl/glutamyl-tRNA(Asn/Gln) amidotransferase subunit B of Streptococcus equi subsp. zooepidemicus (strain MGCS10565).